Reading from the N-terminus, the 539-residue chain is CTP synthase (539 aa).

Residues 1-269 (MSATKYIFVT…DERVLSKLKL (269 aa)) are amidoligase domain. Residue S15 participates in CTP binding. S15 contacts UTP. An ATP-binding site is contributed by 16 to 21 (SLGKGI). Y56 contacts L-glutamine. D73 provides a ligand contact to ATP. Mg(2+) is bound by residues D73 and E143. CTP is bound by residues 150 to 152 (DIE), 190 to 195 (KTKPTQ), and K226. Residues 190–195 (KTKPTQ) and K226 each bind UTP. In terms of domain architecture, Glutamine amidotransferase type-1 spans 295-537 (NIALVGKYVE…VKAANDFAKG (243 aa)). An L-glutamine-binding site is contributed by G357. Catalysis depends on C384, which acts as the Nucleophile; for glutamine hydrolysis. L-glutamine is bound by residues 385–388 (LGMQ), E408, and R465. Active-site residues include H510 and E512.

The protein belongs to the CTP synthase family. As to quaternary structure, homotetramer.

It catalyses the reaction UTP + L-glutamine + ATP + H2O = CTP + L-glutamate + ADP + phosphate + 2 H(+). It carries out the reaction L-glutamine + H2O = L-glutamate + NH4(+). The enzyme catalyses UTP + NH4(+) + ATP = CTP + ADP + phosphate + 2 H(+). The protein operates within pyrimidine metabolism; CTP biosynthesis via de novo pathway; CTP from UDP: step 2/2. With respect to regulation, allosterically activated by GTP, when glutamine is the substrate; GTP has no effect on the reaction when ammonia is the substrate. The allosteric effector GTP functions by stabilizing the protein conformation that binds the tetrahedral intermediate(s) formed during glutamine hydrolysis. Inhibited by the product CTP, via allosteric rather than competitive inhibition. Catalyzes the ATP-dependent amination of UTP to CTP with either L-glutamine or ammonia as the source of nitrogen. Regulates intracellular CTP levels through interactions with the four ribonucleotide triphosphates. This is CTP synthase from Cytophaga hutchinsonii (strain ATCC 33406 / DSM 1761 / CIP 103989 / NBRC 15051 / NCIMB 9469 / D465).